Here is a 265-residue protein sequence, read N- to C-terminus: Apolipoprotein A-I (265 aa).

A signal peptide spans 1–20 (METKAVVLTLAVLFLTGSQA). 2 consecutive repeat copies span residues 69 to 90 (LKIL…EQMR) and 91 to 112 (PIFQ…EVLN). The 10 X approximate tandem repeats stretch occupies residues 69-265 (LKILDNWDTL…DEATKKLNSQ (197 aa)). The stretch at 113–123 (KDLEELKQKVQ) is one 3; half-length repeat. Tandem repeats lie at residues 124–145 (PYLD…QKMA), 146–167 (PLGT…EKLG), 168–189 (PLGE…TQLA), 190–209 (PYTE…LKES), and 210–230 (NLAE…ENAK). Met-195 bears the Methionine sulfoxide mark. Residues 231–241 (PALEDFRQGLM) form a 9; half-length repeat. Met-241 bears the Methionine sulfoxide mark. Repeat 10 spans residues 242-265 (PVLEGFQKSVLAALDEATKKLNSQ).

This sequence belongs to the apolipoprotein A1/A4/E family. In terms of assembly, homodimer. Interacts with APOA1BP and CLU. Component of a sperm activating protein complex (SPAP), consisting of APOA1, an immunoglobulin heavy chain, an immunoglobulin light chain and albumin. Interacts with NDRG1. Interacts with SCGB3A2. Interacts with NAXE and YJEFN3. Glycosylated. In terms of processing, palmitoylated. Post-translationally, phosphorylation sites are present in the extracellular medium. Major protein of plasma HDL, also found in chylomicrons.

It is found in the secreted. Participates in the reverse transport of cholesterol from tissues to the liver for excretion by promoting cholesterol efflux from tissues and by acting as a cofactor for the lecithin cholesterol acyltransferase (LCAT). As part of the SPAP complex, activates spermatozoa motility. This chain is Apolipoprotein A-I (APOA1), found in Orycteropus afer (Aardvark).